Here is a 2698-residue protein sequence, read N- to C-terminus: Zinc finger protein 292 (2698 aa).

The C2H2-type 1 zinc finger occupies 567 to 589; sequence YSCPICAKNFNSKDSFVPHVTLH. Position 654 is a phosphoserine (S654). 6 C2H2-type zinc fingers span residues 681–705, 722–744, 750–774, 779–803, 807–831, and 1085–1110; these read FNCP…VKGH, VICQ…LQMH, YICI…RKEH, AKCL…EAQH, YTCK…QDGH, and FSCQ…KTAH. The segment covering 822-834 has biased composition (basic and acidic residues); that stretch reads SEMEKHQDGHSHP. A disordered region spans residues 822 to 894; it reads SEMEKHQDGH…AEPAVTKHGQ (73 aa). An N6-acetyllysine modification is found at K1104. The residue at position 1146 (S1146) is a Phosphoserine. The span at 1278–1325 shows a compositional bias: polar residues; the sequence is NSTNHYPSQTDGNINSSFLKGGSSENGVFPSQVSSADDFSSTSAQPST. Positions 1278–1349 are disordered; that stretch reads NSTNHYPSQT…KERKPKHNKR (72 aa). The C2H2-type 8; degenerate zinc-finger motif lies at 1361–1383; that stretch reads FICSRCYRAFTNPRSLGGHLSKR. 2 stretches are compositionally biased toward polar residues: residues 1574–1603 and 1624–1633; these read FSSS…TRSS and SVSNTSQNVL. The interval 1574-1656 is disordered; it reads FSSSTEPPQN…PVPDTNTRSD (83 aa). 2 consecutive C2H2-type zinc fingers follow at residues 1879-1904 and 1924-1949; these read FVCQ…GKIH and FKCV…QLVH. Residues 1964–1997 form a disordered region; the sequence is PYGRKSQSENLSSPQNNQVKKQPSMAEETKTESQ. Over residues 1971–1984 the composition is skewed to polar residues; the sequence is SENLSSPQNNQVKK. At K2020 the chain carries N6-acetyllysine. Over residues 2021 to 2032 the composition is skewed to basic and acidic residues; the sequence is QLAEKKSPEKPE. The disordered stretch occupies residues 2021–2075; the sequence is QLAEKKSPEKPESSSQPVTSSAEQYNANLANLKTKGRKNKRHRKEKEEKREKNPV. Positions 2038-2051 are enriched in polar residues; it reads VTSSAEQYNANLAN. A compositionally biased stretch (basic residues) spans 2054–2064; that stretch reads TKGRKNKRHRK. 4 consecutive C2H2-type zinc fingers follow at residues 2091-2116, 2149-2174, 2193-2218, and 2233-2258; these read YCCV…QAVH, FRCQ…MKLH, FPCD…EVDH, and YKCD…FNKH. Residues 2262-2271 show a composition bias toward basic residues; the sequence is HKAHLIRPRK. The segment at 2262-2323 is disordered; sequence HKAHLIRPRK…KSNLENKSAK (62 aa). The segment at 2362 to 2386 adopts a C2H2-type 15 zinc-finger fold; the sequence is YPCMIKGCTSVVTSESNIIRHYKCH. 3 disordered regions span residues 2411–2454, 2467–2553, and 2580–2608; these read GKEI…GEKD, LINE…EEHP, and KQKK…HVDK. Residues 2421–2437 show a composition bias toward basic and acidic residues; that stretch reads KNDKKDPDSSVLEKNDN. Positions 2470 to 2488 are enriched in polar residues; that stretch reads EDSTNAENQGNTTLKGNNE. Basic and acidic residues-rich tracts occupy residues 2489 to 2501 and 2580 to 2590; these read FQEH…ERQK and KQKKNSDRDHS. A compositionally biased stretch (basic residues) spans 2596–2606; that stretch reads RGSHSSSRRHV.

The protein belongs to the krueppel C2H2-type zinc-finger protein family. In terms of tissue distribution, expressed in postnatal day 1 (P1) pituitary. Also detected in presomatotrophic cell line GHFT1-5.

The protein localises to the nucleus. Functionally, may be involved in transcriptional regulation. This is Zinc finger protein 292 from Mus musculus (Mouse).